We begin with the raw amino-acid sequence, 66 residues long: Protein KleD (66 aa).

The segment at residues 33–52 is a DNA-binding region (H-T-H motif); that stretch reads VAVRSGNEWQQVTKWVEPAR.

This chain is Protein KleD (kleD), found in Escherichia coli.